The primary structure comprises 383 residues: Acetylornithine deacetylase (383 aa).

His80 lines the Zn(2+) pocket. The active site involves Asp82. Residue Asp112 coordinates Zn(2+). The active site involves Glu144. Zn(2+)-binding residues include Glu145, Glu169, and His355.

The protein belongs to the peptidase M20A family. ArgE subfamily. Homodimer. Zn(2+) is required as a cofactor. Requires Co(2+) as cofactor. The cofactor is glutathione.

It localises to the cytoplasm. The catalysed reaction is N(2)-acetyl-L-ornithine + H2O = L-ornithine + acetate. It participates in amino-acid biosynthesis; L-arginine biosynthesis; L-ornithine from N(2)-acetyl-L-ornithine (linear): step 1/1. Catalyzes the hydrolysis of the amide bond of N(2)-acetylated L-amino acids. Cleaves the acetyl group from N-acetyl-L-ornithine to form L-ornithine, an intermediate in L-arginine biosynthesis pathway, and a branchpoint in the synthesis of polyamines. In Salmonella agona (strain SL483), this protein is Acetylornithine deacetylase.